We begin with the raw amino-acid sequence, 38 residues long: Large ribosomal subunit protein bL36 (38 aa).

It belongs to the bacterial ribosomal protein bL36 family.

The polypeptide is Large ribosomal subunit protein bL36 (Buchnera aphidicola subsp. Baizongia pistaciae (strain Bp)).